A 522-amino-acid chain; its full sequence is Peptide chain release factor 3 (522 aa).

In terms of domain architecture, tr-type G spans 10 to 277; the sequence is ASRKTFAIIS…TFVDFAPAPS (268 aa). Residues 19-26, 87-91, and 141-144 each bind GTP; these read SHPDAGKT, DTPGH, and NKMD.

Belongs to the TRAFAC class translation factor GTPase superfamily. Classic translation factor GTPase family. PrfC subfamily.

The protein localises to the cytoplasm. Functionally, increases the formation of ribosomal termination complexes and stimulates activities of RF-1 and RF-2. It binds guanine nucleotides and has strong preference for UGA stop codons. It may interact directly with the ribosome. The stimulation of RF-1 and RF-2 is significantly reduced by GTP and GDP, but not by GMP. This Listeria welshimeri serovar 6b (strain ATCC 35897 / DSM 20650 / CCUG 15529 / CIP 8149 / NCTC 11857 / SLCC 5334 / V8) protein is Peptide chain release factor 3.